A 187-amino-acid polypeptide reads, in one-letter code: Large ribosomal subunit protein uL5 (187 aa).

This sequence belongs to the universal ribosomal protein uL5 family. Part of the 50S ribosomal subunit; part of the 5S rRNA/L5/L18/L25 subcomplex. Contacts the 5S rRNA and the P site tRNA. Forms a bridge to the 30S subunit in the 70S ribosome.

Its function is as follows. This is one of the proteins that bind and probably mediate the attachment of the 5S RNA into the large ribosomal subunit, where it forms part of the central protuberance. In the 70S ribosome it contacts protein S13 of the 30S subunit (bridge B1b), connecting the 2 subunits; this bridge is implicated in subunit movement. Contacts the P site tRNA; the 5S rRNA and some of its associated proteins might help stabilize positioning of ribosome-bound tRNAs. This chain is Large ribosomal subunit protein uL5, found in Nocardia farcinica (strain IFM 10152).